Consider the following 89-residue polypeptide: Acylphosphatase (89 aa).

The Acylphosphatase-like domain maps to 3–89; sequence ALEIYVSGNV…ENYESFEVAY (87 aa). Active-site residues include R18 and N36.

Belongs to the acylphosphatase family.

It catalyses the reaction an acyl phosphate + H2O = a carboxylate + phosphate + H(+). In Archaeoglobus fulgidus (strain ATCC 49558 / DSM 4304 / JCM 9628 / NBRC 100126 / VC-16), this protein is Acylphosphatase (acyP).